The chain runs to 1368 residues: DNA-directed RNA polymerase subunit beta (1368 aa).

This sequence belongs to the RNA polymerase beta chain family. In terms of assembly, the RNAP catalytic core consists of 2 alpha, 1 beta, 1 beta' and 1 omega subunit. When a sigma factor is associated with the core the holoenzyme is formed, which can initiate transcription.

The enzyme catalyses RNA(n) + a ribonucleoside 5'-triphosphate = RNA(n+1) + diphosphate. Functionally, DNA-dependent RNA polymerase catalyzes the transcription of DNA into RNA using the four ribonucleoside triphosphates as substrates. The protein is DNA-directed RNA polymerase subunit beta of Burkholderia ambifaria (strain MC40-6).